The sequence spans 389 residues: Ankyrin repeat domain-containing protein 42 (389 aa).

The disordered stretch occupies residues 1–21 (MPGVANSGPSTSSRETANPCS). A compositionally biased stretch (polar residues) spans 7 to 19 (SGPSTSSRETANP). 9 ANK repeats span residues 25 to 60 (VHFGSIHDAVRAGDVKQLSEIVCLHWLLWHGADITH), 64 to 93 (RGWTASHIAAIRGQDACVQALIMNGANLTA), 97 to 126 (RGCTPLHLAATHGHSFTLQIMLRSGVDPSV), 130 to 159 (REWRPVHYAAFHGRLGCLQLLVKWGCSIED), 163 to 192 (NGNLPVHLAAMEGHLHCFKFLVSRMSSATQ), 200 to 232 (NGENVLDLAQRFFKQNILQFIQGAEYEGKDLED), 235 to 265 (TLAFPGHVAAFKGDLGMLKKLVEDGVININE), 269 to 298 (NGSTPMHKAAGQGHIECLQWLIKMGADSNI), and 302 to 332 (AGERPSDVAKRFAHLAAVKLLEELQKYDIDD).

In Homo sapiens (Human), this protein is Ankyrin repeat domain-containing protein 42 (ANKRD42).